The following is a 238-amino-acid chain: 2,3,4,5-tetrahydropyridine-2,6-dicarboxylate N-acetyltransferase (238 aa).

Belongs to the transferase hexapeptide repeat family. DapH subfamily.

The enzyme catalyses (S)-2,3,4,5-tetrahydrodipicolinate + acetyl-CoA + H2O = L-2-acetamido-6-oxoheptanedioate + CoA. It functions in the pathway amino-acid biosynthesis; L-lysine biosynthesis via DAP pathway; LL-2,6-diaminopimelate from (S)-tetrahydrodipicolinate (acetylase route): step 1/3. Its function is as follows. Catalyzes the transfer of an acetyl group from acetyl-CoA to tetrahydrodipicolinate. The sequence is that of 2,3,4,5-tetrahydropyridine-2,6-dicarboxylate N-acetyltransferase from Clostridioides difficile (strain 630) (Peptoclostridium difficile).